Reading from the N-terminus, the 311-residue chain is Giardin subunit alpha-8 (311 aa).

Annexin repeat units follow at residues Arg-5–Trp-73, Asn-75–Met-146, Asn-154–Tyr-223, and Glu-227–Arg-295.

Belongs to the annexin family. Giardin subunit alpha subfamily.

Its subcellular location is the cytoplasm. It localises to the cytoskeleton. Functionally, giardins are involved in parasite attachment to the intestinal mucosa and in the cytoskeletal disassembly and reassembly that marks the transition from infectious trophozoite to transmissible cyst. They may interact with other cytoskeletal proteins such as microtubules in the microribbons or crossbridges, to maintain the integrity of the ventral disk. This Giardia intestinalis (Giardia lamblia) protein is Giardin subunit alpha-8.